The sequence spans 309 residues: Aspartate carbamoyltransferase catalytic subunit (309 aa).

The carbamoyl phosphate site is built by arginine 54 and threonine 55. Lysine 82 is a binding site for L-aspartate. Arginine 104, histidine 132, and glutamine 135 together coordinate carbamoyl phosphate. Positions 165 and 219 each coordinate L-aspartate. 2 residues coordinate carbamoyl phosphate: glycine 260 and proline 261.

This sequence belongs to the aspartate/ornithine carbamoyltransferase superfamily. ATCase family. In terms of assembly, heterododecamer (2C3:3R2) of six catalytic PyrB chains organized as two trimers (C3), and six regulatory PyrI chains organized as three dimers (R2).

The catalysed reaction is carbamoyl phosphate + L-aspartate = N-carbamoyl-L-aspartate + phosphate + H(+). It functions in the pathway pyrimidine metabolism; UMP biosynthesis via de novo pathway; (S)-dihydroorotate from bicarbonate: step 2/3. Catalyzes the condensation of carbamoyl phosphate and aspartate to form carbamoyl aspartate and inorganic phosphate, the committed step in the de novo pyrimidine nucleotide biosynthesis pathway. The chain is Aspartate carbamoyltransferase catalytic subunit from Parafrankia sp. (strain EAN1pec).